Consider the following 186-residue polypeptide: tRNA (cytidine(56)-2'-O)-methyltransferase (186 aa).

S-adenosyl-L-methionine is bound by residues Leu-84 and 110 to 114 (GAEKV).

The protein belongs to the aTrm56 family. In terms of assembly, homodimer.

The protein localises to the cytoplasm. It carries out the reaction cytidine(56) in tRNA + S-adenosyl-L-methionine = 2'-O-methylcytidine(56) in tRNA + S-adenosyl-L-homocysteine + H(+). Its function is as follows. Specifically catalyzes the AdoMet-dependent 2'-O-ribose methylation of cytidine at position 56 in tRNAs. The polypeptide is tRNA (cytidine(56)-2'-O)-methyltransferase (Staphylothermus marinus (strain ATCC 43588 / DSM 3639 / JCM 9404 / F1)).